The following is a 324-amino-acid chain: Putative exosome complex exonuclease RRP42 (324 aa).

This sequence belongs to the RNase PH family. In terms of assembly, component of the RNA exosome complex.

It is found in the nucleus. It localises to the nucleolus. The protein resides in the cytoplasm. Non-catalytic component of the RNA exosome complex which has 3'-&gt;5' exoribonuclease activity and participates in a multitude of cellular RNA processing and degradation events. The polypeptide is Putative exosome complex exonuclease RRP42 (exosc7) (Dictyostelium discoideum (Social amoeba)).